The primary structure comprises 101 residues: Small ribosomal subunit protein uS14A (101 aa).

The interval 31 to 73 (IKSPSTTPEARVAAQSELNRQPRDASPVRVRNRDSVDGRPRGH) is disordered. A compositionally biased stretch (basic and acidic residues) spans 61–70 (RNRDSVDGRP).

Belongs to the universal ribosomal protein uS14 family. In terms of assembly, part of the 30S ribosomal subunit. Contacts proteins S3 and S10.

Binds 16S rRNA, required for the assembly of 30S particles and may also be responsible for determining the conformation of the 16S rRNA at the A site. The chain is Small ribosomal subunit protein uS14A from Mycolicibacterium vanbaalenii (strain DSM 7251 / JCM 13017 / BCRC 16820 / KCTC 9966 / NRRL B-24157 / PYR-1) (Mycobacterium vanbaalenii).